The primary structure comprises 375 residues: Growth/differentiation factor 8 (375 aa).

A signal peptide spans 1-23; it reads MQKLAVYVYIYLFMQIAVDPVAL. The propeptide occupies 24-266; sequence DGSSQPTENA…VTDTPKRSRR (243 aa). N-linked (GlcNAc...) asparagine glycosylation is present at Asn71. Intrachain disulfides connect Cys272–Cys282, Cys281–Cys340, Cys309–Cys372, and Cys313–Cys374.

Belongs to the TGF-beta family. In terms of assembly, homodimer; disulfide-linked.

The protein localises to the secreted. Functionally, acts specifically as a negative regulator of skeletal muscle growth. In Gallus gallus (Chicken), this protein is Growth/differentiation factor 8 (MSTN).